The chain runs to 229 residues: MFAIQPGLAEGGQFLGDPPPGLCQPELQPDSNSNFMASAKDANENWHGMPGRVEPILRRSSSESPSDNQAFQAPGSPEEGVRSPPEGAEIPGAEPEKMGGAGTVCSPLEDNGYASSSLSIDSRSSSPEPACGTPRGPGPPDPLLPSVAQAVQHLQVQERYKEQEKEKHHVHLVMYRRLALLQWIRGLQHQLIDQQARLQESFDTILDNRKELIRCLQQRAAPSRPQDQA.

The tract at residues 1 to 144 (MFAIQPGLAE…RGPGPPDPLL (144 aa)) is disordered. The segment covering 62 to 71 (SESPSDNQAF) has biased composition (polar residues). Composition is skewed to low complexity over residues 84 to 93 (PPEGAEIPGA) and 115 to 126 (SSSLSIDSRSSS).

This sequence belongs to the UPF0500 family.

This chain is UPF0500 protein C1orf216 (C1orf216), found in Homo sapiens (Human).